The primary structure comprises 412 residues: Divalent metal cation transporter MntH (412 aa).

At 1–19 (MTNYRVESSSGRAARKMRL) the chain is on the cytoplasmic side. A helical membrane pass occupies residues 20 to 39 (ALMGPAFIAAIGYIDPGNFA). Topologically, residues 40 to 51 (TNIQAGASFGYQ) are periplasmic. Residues 52 to 71 (LLWVVVWANLMAMLIQILSA) traverse the membrane as a helical segment. The Cytoplasmic segment spans residues 72–95 (KLGIATGKNLAEQIRDHYPRPFVW). The chain crosses the membrane as a helical span at residues 96-118 (FYWVQAEIIAMATDLAEFIGAAI). Residues 119 to 125 (GFKLILG) are Periplasmic-facing. The helical transmembrane segment at 126–145 (VSLLQGAVLTGIATFLILML) threads the bilayer. Residues 146–155 (QRRGQKPLEK) lie on the Cytoplasmic side of the membrane. Residues 156 to 175 (VIGGLLLFVAAAYIVELIFS) form a helical membrane-spanning segment. Over 176–196 (QPNLAQLGKGMVIPSLPTSEA) the chain is Periplasmic. The chain crosses the membrane as a helical span at residues 197 to 220 (VFLAAGVLGATIMPHVIYLHSSLT). At 221 to 238 (QHLHGGSRQQRYSATKWD) the chain is on the cytoplasmic side. The helical transmembrane segment at 239 to 258 (VAIAMTIAGFVNLAMMATAA) threads the bilayer. Residues 259–276 (AAFHFSGHTGVADLDEAY) are Periplasmic-facing. A helical membrane pass occupies residues 277 to 297 (LTLQPLLSHAAATVFGLSLVA). The Cytoplasmic portion of the chain corresponds to 298-327 (AGLSSTVVGTLAGQVVMQGFIRFHIPLWVR). The chain crosses the membrane as a helical span at residues 328–344 (RTVTMLPSFIVILMGLD). Over 345–350 (PTRILV) the chain is Periplasmic. The helical transmembrane segment at 351–370 (MSQVLLSFGIALALVPLLIF) threads the bilayer. Residues 371 to 387 (TSDSKLMGDLVNSKRVK) lie on the Cytoplasmic side of the membrane. A helical transmembrane segment spans residues 388–406 (QTGWVIVVLVVALNIWLLV). Topologically, residues 407–412 (GTALGL) are periplasmic.

Belongs to the NRAMP family.

The protein resides in the cell inner membrane. Functionally, h(+)-stimulated, divalent metal cation uptake system. The sequence is that of Divalent metal cation transporter MntH from Escherichia coli O127:H6 (strain E2348/69 / EPEC).